The primary structure comprises 491 residues: Ketol-acid reductoisomerase (NADP(+)) (491 aa).

A KARI N-terminal Rossmann domain is found at A15–S208. NADP(+) contacts are provided by residues C45 to Q48, R68, R76, S78, and D108 to Q110. The active site involves H132. NADP(+) is bound at residue G158. KARI C-terminal knotted domains are found at residues S209–Q344 and Y345–M484. The Mg(2+) site is built by D217, E221, E389, and E393. S414 contributes to the substrate binding site.

This sequence belongs to the ketol-acid reductoisomerase family. Requires Mg(2+) as cofactor.

It catalyses the reaction (2R)-2,3-dihydroxy-3-methylbutanoate + NADP(+) = (2S)-2-acetolactate + NADPH + H(+). It carries out the reaction (2R,3R)-2,3-dihydroxy-3-methylpentanoate + NADP(+) = (S)-2-ethyl-2-hydroxy-3-oxobutanoate + NADPH + H(+). It functions in the pathway amino-acid biosynthesis; L-isoleucine biosynthesis; L-isoleucine from 2-oxobutanoate: step 2/4. Its pathway is amino-acid biosynthesis; L-valine biosynthesis; L-valine from pyruvate: step 2/4. Its function is as follows. Involved in the biosynthesis of branched-chain amino acids (BCAA). Catalyzes an alkyl-migration followed by a ketol-acid reduction of (S)-2-acetolactate (S2AL) to yield (R)-2,3-dihydroxy-isovalerate. In the isomerase reaction, S2AL is rearranged via a Mg-dependent methyl migration to produce 3-hydroxy-3-methyl-2-ketobutyrate (HMKB). In the reductase reaction, this 2-ketoacid undergoes a metal-dependent reduction by NADPH to yield (R)-2,3-dihydroxy-isovalerate. This Escherichia coli O7:K1 (strain IAI39 / ExPEC) protein is Ketol-acid reductoisomerase (NADP(+)).